Consider the following 1020-residue polypeptide: DNA-directed RNA polymerase 2, chloroplastic/mitochondrial (1020 aa).

A disordered region spans residues 314-336 (KKQKAEKDKQKEDGEHVTQEQEK). Catalysis depends on residues Asp-721, Lys-796, and Asp-953.

This sequence belongs to the phage and mitochondrial RNA polymerase family. The highest levels of expression are detected in the mature leaves. The level of expression is lowest in the cotyledons.

The protein resides in the plastid. It is found in the chloroplast. Its subcellular location is the mitochondrion. The catalysed reaction is RNA(n) + a ribonucleoside 5'-triphosphate = RNA(n+1) + diphosphate. Its function is as follows. DNA-dependent RNA polymerase catalyzes the transcription of DNA into RNA using the four ribonucleoside triphosphates as substrates. The polypeptide is DNA-directed RNA polymerase 2, chloroplastic/mitochondrial (RPOT2) (Nicotiana sylvestris (Wood tobacco)).